A 391-amino-acid chain; its full sequence is Heme A synthase (391 aa).

Transmembrane regions (helical) follow at residues 37 to 57 (IRLWLMALFLLVMAMIVVGGL), 121 to 141 (RQLGRVIGLVWAVGFLGFLAA), 152 to 172 (LLALGALGGLQGGIGWWMVAS), 186 to 206 (LATHLGLAFIILGLIAWQALL), 229 to 249 (TTVLIGVAFLQIVLGALVAGI), 298 to 318 (FLHRMAGYTLAALGLIFWIFG), 332 to 352 (LLAMALLAQILLGVGTVLSAA), and 354 to 374 (WQVAIAHQVGAVVIWVLILHA). H300 contributes to the heme binding site. H360 is a binding site for heme.

It belongs to the COX15/CtaA family. Type 2 subfamily. As to quaternary structure, interacts with CtaB. Requires heme b as cofactor.

Its subcellular location is the cell membrane. It catalyses the reaction Fe(II)-heme o + 2 A + H2O = Fe(II)-heme a + 2 AH2. The protein operates within porphyrin-containing compound metabolism; heme A biosynthesis; heme A from heme O: step 1/1. Functionally, catalyzes the conversion of heme O to heme A by two successive hydroxylations of the methyl group at C8. The first hydroxylation forms heme I, the second hydroxylation results in an unstable dihydroxymethyl group, which spontaneously dehydrates, resulting in the formyl group of heme A. This chain is Heme A synthase, found in Cereibacter sphaeroides (strain ATCC 17023 / DSM 158 / JCM 6121 / CCUG 31486 / LMG 2827 / NBRC 12203 / NCIMB 8253 / ATH 2.4.1.) (Rhodobacter sphaeroides).